A 343-amino-acid polypeptide reads, in one-letter code: Methionine import ATP-binding protein MetN 1 (343 aa).

Residues 2 to 241 form the ABC transporter domain; it reads IKLTHISKVF…PKTPLAQQFI (240 aa). 38-45 contributes to the ATP binding site; sequence GASGAGKS.

The protein belongs to the ABC transporter superfamily. Methionine importer (TC 3.A.1.24) family. In terms of assembly, the complex is composed of two ATP-binding proteins (MetN), two transmembrane proteins (MetI) and a solute-binding protein (MetQ).

It localises to the cell inner membrane. The enzyme catalyses L-methionine(out) + ATP + H2O = L-methionine(in) + ADP + phosphate + H(+). The catalysed reaction is D-methionine(out) + ATP + H2O = D-methionine(in) + ADP + phosphate + H(+). In terms of biological role, part of the ABC transporter complex MetNIQ involved in methionine import. Responsible for energy coupling to the transport system. This chain is Methionine import ATP-binding protein MetN 1, found in Yersinia pestis bv. Antiqua (strain Antiqua).